We begin with the raw amino-acid sequence, 338 residues long: MSSSVSSTSAPTKIVIPDLVSHCTIPVRCNRHWKQASVESKRWLFRGGNLSDRKRDAFHGLKAGYLTSMCYPLAGYPQLRVSCDFMNYLFHLDNISDEMNDRGTHGTAVSVLDALYQPHMHPTSRVGKMTKDYWVRLIQTASPGAQQRFIETFDMFFQAVTQQAMDRANGVIPDLESYIAIRRDTSGCKPCWALIEYANNLDLPWEIMDHPIIRGLGEAANDLVTWSNDIFSYNVEQSKGDTHNMIVVVQNQQGLDLQSAVNFVGDLCKQSIDRFHYLRENLPSWGPELDREVEIYVDGLADWITGSLKWSFESERYFGKAGLEVKKTRVVALLPRRA.

Mg(2+) is bound by residues D93, N228, S232, and E236. A DDXXD motif motif is present at residues D93–D97. The NSE/DTE motif signature appears at N228 to E236. Positions 316 and 317 each coordinate (2E,6E)-farnesyl diphosphate.

This sequence belongs to the terpene synthase family. It depends on Mg(2+) as a cofactor.

The enzyme catalyses (2E,6E)-farnesyl diphosphate = alpha-copaene + diphosphate. It catalyses the reaction (2E,6E)-farnesyl diphosphate = beta-copaene + diphosphate. It carries out the reaction (2E,6E)-farnesyl diphosphate = alpha-muurolene + diphosphate. The catalysed reaction is (2E,6E)-farnesyl diphosphate = gamma-muurolene + diphosphate. The enzyme catalyses (2E,6E)-farnesyl diphosphate = delta-cadinene + diphosphate. Its function is as follows. Terpene cyclase that catalyzes the cyclization of farnesyl diphosphate (FPP) to various sesquiterpenes, including alpha-copaene, beta-copaene, beta-elemene, alpha-muurolene, gamma-muurolene and delta-cadinene. This chain is Sesquiterpene synthase 2, found in Postia placenta (strain ATCC 44394 / Madison 698-R) (Brown rot fungus).